The primary structure comprises 226 residues: Deoxyribose-phosphate aldolase (226 aa).

Residue aspartate 95 is the Proton donor/acceptor of the active site. Catalysis depends on lysine 157, which acts as the Schiff-base intermediate with acetaldehyde. The active-site Proton donor/acceptor is lysine 186.

This sequence belongs to the DeoC/FbaB aldolase family. DeoC type 1 subfamily.

The protein localises to the cytoplasm. The enzyme catalyses 2-deoxy-D-ribose 5-phosphate = D-glyceraldehyde 3-phosphate + acetaldehyde. Its pathway is carbohydrate degradation; 2-deoxy-D-ribose 1-phosphate degradation; D-glyceraldehyde 3-phosphate and acetaldehyde from 2-deoxy-alpha-D-ribose 1-phosphate: step 2/2. Partially inhibited by acetaldehyde. After incubation for 2, 4 and 6 hours in 300 mM acetaldehyde at 25 degrees Celsius, retains approximately 61.32%, 42.33% and 34.73% of the initial 2-deoxy-D-ribose-5-phosphate (DR5P) cleavage activity, respectively. Its function is as follows. Catalyzes a reversible aldol reaction between acetaldehyde and D-glyceraldehyde 3-phosphate to generate 2-deoxy-D-ribose 5-phosphate. Functionally, in vitro, DERA can catalyze the aldol condensation of chloroacetaldehyde (CHAD) and acetaldehyde (ACD), yielding (S)-4-chloro-3-hydroxybutanal ((S)-CHB), which can combine with another aldehyde to form (3R,5S)-6-chloro-2,4,6-trideoxyhexapyranose (CTeHP), a key intermediate for statin drugs. The sequence is that of Deoxyribose-phosphate aldolase from Pseudomonas syringae pv. syringae (strain B728a).